A 197-amino-acid chain; its full sequence is Putative early 21.8 kDa protein (197 aa).

Functionally, this protein is required for viral late gene expression. The sequence is that of Putative early 21.8 kDa protein (DA26) from Orgyia pseudotsugata (Douglas-fir tussock moth).